We begin with the raw amino-acid sequence, 407 residues long: Putative metabolite transport protein HI_1104 (407 aa).

Residues 1–16 lie on the Cytoplasmic side of the membrane; it reads MTNKVNSYGWKALIGS. The chain crosses the membrane as a helical span at residues 17-37; sequence AVGYGMDGFDLLILGFMLSAI. The Periplasmic segment spans residues 38 to 48; the sequence is SADLNLTPAQG. A helical membrane pass occupies residues 49–69; sequence GSLVTWTLIGAVFGGILFGAL. Over 70-77 the chain is Cytoplasmic; sequence SDKYGRVR. Residues 78-98 form a helical membrane-spanning segment; the sequence is VLTWTILLFAVFTGLCAIAQG. Residues 99 to 107 lie on the Periplasmic side of the membrane; it reads YWDLLIYRT. The helical transmembrane segment at 108 to 128 threads the bilayer; it reads IAGIGLGGEFGIGMALAAEAW. At 129–138 the chain is on the cytoplasmic side; sequence PARHRAKAAS. The chain crosses the membrane as a helical span at residues 139–159; sequence YVALGWQVGVLGAALLTPLLL. Residue Pro160 is a topological domain, periplasmic. Residues 161–181 form a helical membrane-spanning segment; it reads HIGWRGMFLVGIFPAFVAWFL. Topologically, residues 182-224 are cytoplasmic; sequence RSHLHEPEIFTQKQTALSTQSSFTDKLRSFQLLIKDKATSKIS. The chain crosses the membrane as a helical span at residues 225 to 245; it reads LGIVVLTSVQNFGYYGIMIWL. Over 246–261 the chain is Periplasmic; it reads PNFLSKQLGFSLTKSG. A helical transmembrane segment spans residues 262-282; the sequence is LWTAVTVCGMMAGIWIFGQLA. Residues 283 to 288 lie on the Cytoplasmic side of the membrane; sequence DRIGRK. The helical transmembrane segment at 289–309 threads the bilayer; sequence PSFLLFQLGAVISIVVYSQLT. Residues 310–312 lie on the Periplasmic side of the membrane; that stretch reads DPD. A helical membrane pass occupies residues 313–333; sequence IMLLAGAFLGMFVNGMLGGYG. The Cytoplasmic segment spans residues 334–357; it reads ALMAEAYPTEARATAQNVLFNIGR. 2 consecutive transmembrane segments (helical) span residues 358 to 378 and 379 to 399; these read AVGG…SFQT and AIAL…FLIP. Over 400 to 407 the chain is Cytoplasmic; sequence ELKGKALD.

It belongs to the major facilitator superfamily. Aromatic acid:H(+) symporter (AAHS) (TC 2.A.1.15) family.

It is found in the cell inner membrane. This is Putative metabolite transport protein HI_1104 from Haemophilus influenzae (strain ATCC 51907 / DSM 11121 / KW20 / Rd).